Consider the following 424-residue polypeptide: Mitogen-activated protein kinase 9 (424 aa).

In terms of domain architecture, Protein kinase spans 26–321; sequence YQQLKPIGSG…VDEALRHPYI (296 aa). ATP contacts are provided by residues 32–40 and lysine 55; that span reads IGSGAQGIV. Catalysis depends on aspartate 151, which acts as the Proton acceptor. Threonine 183 is modified (phosphothreonine; by MAP2K7). The short motif at 183–185 is the TXY element; it reads TPY. Phosphotyrosine; by MAP2K4 is present on tyrosine 185. A disordered region spans residues 368–424; that stretch reads KNGVVKDQPSDAAVSSNATPSQSSSINDISSMSTEQTLASDTDSSLDASTGPLEGCR. The segment covering 388–417 has biased composition (low complexity); that stretch reads SQSSSINDISSMSTEQTLASDTDSSLDAST.

This sequence belongs to the protein kinase superfamily. CMGC Ser/Thr protein kinase family. MAP kinase subfamily. Interacts with MECOM. Interacts with DCLK2. Binds to at least four scaffolding proteins, MAPK8IP1/JIP-1, MAPK8IP2/JIP-2, MAPK8IP3/JIP-3/JSAP1 and SPAG9/MAPK8IP4/JIP-4. These proteins also bind other components of the JNK signaling pathway. Interacts with NFATC4. Interacts with ATF7; the interaction does not phosphorylate ATF7 but acts as a docking site for ATF7-associated partners such as JUN. Interacts with BCL10. Interacts with CTNNB1 and GSK3B. Interacts with MAPKBP1. Interacts with POU5F1; phosphorylates POU5F1 at 'Ser-355'. Found in a complex with SH3RF1, RAC2, MAP3K7/TAK1, MAP2K7/MKK7, MAPK8IP1/JIP1 and MAPK8/JNK1. Mg(2+) serves as cofactor. In terms of processing, dually phosphorylated on Thr-183 and Tyr-185 by MAP2K7 and MAP2K4, which activates the enzyme. Autophosphorylated in vitro.

The protein localises to the cytoplasm. The protein resides in the nucleus. It carries out the reaction L-seryl-[protein] + ATP = O-phospho-L-seryl-[protein] + ADP + H(+). The catalysed reaction is L-threonyl-[protein] + ATP = O-phospho-L-threonyl-[protein] + ADP + H(+). With respect to regulation, activated by threonine and tyrosine phosphorylation by either of two dual specificity kinases, MAP2K4 and MAP2K7. MAP2K4 shows a strong preference for Tyr-185 while MAP2K7 phosphorylates Tyr-183 preferentially. Inhibited by dual specificity phosphatases, such as DUSP1. Functionally, serine/threonine-protein kinase involved in various processes such as cell proliferation, differentiation, migration, transformation and programmed cell death. Extracellular stimuli such as pro-inflammatory cytokines or physical stress stimulate the stress-activated protein kinase/c-Jun N-terminal kinase (SAP/JNK) signaling pathway. In this cascade, two dual specificity kinases MAP2K4/MKK4 and MAP2K7/MKK7 phosphorylate and activate MAPK9/JNK2. In turn, MAPK9/JNK2 phosphorylates a number of transcription factors, primarily components of AP-1 such as JUN and ATF2 and thus regulates AP-1 transcriptional activity. In response to oxidative or ribotoxic stresses, inhibits rRNA synthesis by phosphorylating and inactivating the RNA polymerase 1-specific transcription initiation factor RRN3. Promotes stressed cell apoptosis by phosphorylating key regulatory factors including TP53 and YAP1. In T-cells, MAPK8 and MAPK9 are required for polarized differentiation of T-helper cells into Th1 cells. Upon T-cell receptor (TCR) stimulation, is activated by CARMA1, BCL10, MAP2K7 and MAP3K7/TAK1 to regulate JUN protein levels. Plays an important role in the osmotic stress-induced epithelial tight-junctions disruption. When activated, promotes beta-catenin/CTNNB1 degradation and inhibits the canonical Wnt signaling pathway. Also participates in neurite growth in spiral ganglion neurons. Phosphorylates the CLOCK-BMAL1 heterodimer and plays a role in the regulation of the circadian clock. Phosphorylates POU5F1, which results in the inhibition of POU5F1's transcriptional activity and enhances its proteasomal degradation. Phosphorylates ALKBH5 in response to reactive oxygen species (ROS), promoting ALKBH5 sumoylation and inactivation. Its function is as follows. MAPK9 isoforms display different binding patterns: alpha-1 and alpha-2 preferentially bind to JUN, whereas beta-1 and beta-2 bind to ATF2. However, there is no correlation between binding and phosphorylation, which is achieved at about the same efficiency by all isoforms. JUNB is not a substrate for JNK2 alpha-2, and JUND binds only weakly to it. The chain is Mitogen-activated protein kinase 9 (MAPK9) from Homo sapiens (Human).